The sequence spans 423 residues: Glycine amidinotransferase, mitochondrial (423 aa).

The transit peptide at 1–48 (MLRVRCLRGGSRGAEAVHYIGSRLGRTLTGWVQRTFQSTQAATASSRN) directs the protein to the mitochondrion. Over residues 39 to 51 (TQAATASSRNSSA) the composition is skewed to low complexity. Positions 39–65 (TQAATASSRNSSAADDKATEPLPKDCP) are disordered. Phosphoserine is present on residues Ser-46 and Ser-49. Over residues 52–61 (ADDKATEPLP) the composition is skewed to basic and acidic residues. Asp-170 is a binding site for arginine. Active-site residues include Asp-254 and His-303. Asp-305, Arg-322, Ser-354, and Ser-355 together coordinate arginine. Lys-385 is subject to N6-acetyllysine. Cys-407 (amidino-cysteine intermediate) is an active-site residue.

The protein belongs to the amidinotransferase family. In terms of assembly, homodimer.

It is found in the mitochondrion inner membrane. The enzyme catalyses L-arginine + glycine = guanidinoacetate + L-ornithine. The catalysed reaction is 4-aminobutanoate + L-arginine = 4-guanidinobutanoate + L-ornithine. It carries out the reaction beta-alanine + L-arginine = 3-guanidinopropanoate + L-ornithine. It catalyses the reaction taurine + L-arginine = taurocyamine + L-ornithine. Its pathway is amine and polyamine biosynthesis; creatine biosynthesis; creatine from L-arginine and glycine: step 1/2. In terms of biological role, transamidinase that catalyzes the transfer of the amidino group of L-arginine onto the amino moiety of acceptor metabolites such as glycine, beta-alanine, gamma-aminobutyric acid (GABA) and taurine yielding the corresponding guanidine derivatives. Catalyzes the rate-limiting step of creatine biosynthesis, namely the transfer of the amidino group from L-arginine to glycine to generate guanidinoacetate, which is then methylated by GAMT to form creatine. Provides creatine as a source for ATP generation in tissues with high energy demands, in particular skeletal muscle, heart and brain. The sequence is that of Glycine amidinotransferase, mitochondrial (GATM) from Pongo abelii (Sumatran orangutan).